The chain runs to 686 residues: WD repeat-containing protein 93 (686 aa).

Polar residues predominate over residues 1–10; sequence MSFPRGSQTQ. The interval 1-40 is disordered; that stretch reads MSFPRGSQTQKIKHPIGTRKGPLEVPPPTEKDWPKDDEQD. Residues 29–40 are compositionally biased toward basic and acidic residues; sequence TEKDWPKDDEQD. Residues 410–449 form a WD repeat; that stretch reads PCAAPIAVSQLSCSSSYLVLACEDGVLTLWDLAKGFPLGV.

This chain is WD repeat-containing protein 93 (WDR93), found in Homo sapiens (Human).